The following is a 113-amino-acid chain: Ribosome-associated factor Y (113 aa).

Lysine 66 is subject to N6-acetyllysine. Positions 91 to 113 (KGEARRAATSVKDANFVEEVEEE) are disordered.

Belongs to the HPF/YfiA ribosome-associated protein family. YfiA subfamily. In terms of assembly, associates mainly with 70S ribosomes.

In terms of biological role, during stationary phase, prevents 70S dimer formation, probably in order to regulate translation efficiency during transition between the exponential and the stationary phases. In addition, during environmental stress such as cold shock or excessive cell density at stationary phase, stabilizes the 70S ribosome against dissociation, inhibits translation initiation and increase translation accuracy. When normal growth conditions are restored, is quickly released from the ribosome. The sequence is that of Ribosome-associated factor Y from Escherichia coli O157:H7.